The primary structure comprises 433 residues: Type I acyl-CoA thioesterase mpaH (433 aa).

The interval 58–246 (HGVGLPKELY…VKARFDAAAD (189 aa)) is abhydrolase domain. Residue valine 60 participates in substrate binding. The active-site Nucleophile is serine 139. Phenylalanine 140 contributes to the substrate binding site. Catalysis depends on residues aspartate 163 and histidine 365.

The protein belongs to the AB hydrolase superfamily. MpaH hydrolase family. In terms of assembly, homodimer.

Its subcellular location is the peroxisome matrix. The catalysed reaction is mycophenolyl-CoA + H2O = mycophenolate + CoA + H(+). Its pathway is secondary metabolite biosynthesis; terpenoid biosynthesis. Functionally, type I acyl-CoA thioesterase; part of the gene cluster that mediates the biosynthesis of mycophenolic acid (MPA), the first isolated antibiotic natural product in the world obtained from a culture of Penicillium brevicompactum in 1893. MpaH acts as a peroxisomal acyl-CoA hydrolase that converts MPA-CoA into the final product MPA. The first step of the pathway is the synthesis of 5-methylorsellinic acid (5MOA) by the cytosolic polyketide synthase mpaC. 5MOA is then converted to the phthalide compound 5,7-dihydroxy-4,6-dimethylphthalide (DHMP) by the endoplasmic reticulum-bound cytochrome P450 monooxygenase mpaDE. MpaDE first catalyzes hydroxylation of 5-MOA to 4,6-dihydroxy-2-(hydroxymethyl)-3-methylbenzoic acid (DHMB). MpaDE then acts as a lactone synthase that catalyzes the ring closure to convert DHMB into DHMP. The next step is the prenylation of DHMP by the Golgi apparatus-associated prenyltransferase mpaA to yield farnesyl-DHMP (FDHMP). The ER-bound oxygenase mpaB then mediates the oxidative cleavage the C19-C20 double bond in FDHMP to yield FDHMP-3C via a mycophenolic aldehyde intermediate. The O-methyltransferase mpaG catalyzes the methylation of FDHMP-3C to yield MFDHMP-3C. After the cytosolic methylation of FDHMP-3C, MFDHMP-3C enters into peroxisomes probably via free diffusion due to its low molecular weight. Upon a peroxisomal CoA ligation reaction, catalyzed by a beta-oxidation component enzyme acyl-CoA ligase ACL891, MFDHMP-3C-CoA would then be restricted to peroxisomes for the following beta-oxidation pathway steps. The peroxisomal beta-oxidation machinery than converts MFDHMP-3C-CoA into MPA_CoA, via a beta-oxidation chain-shortening process. Finally mpaH acts as a peroxisomal acyl-CoA hydrolase with high substrate specificity toward MPA-CoA to release the final product MPA. This is Type I acyl-CoA thioesterase mpaH from Penicillium roqueforti (strain FM164).